We begin with the raw amino-acid sequence, 513 residues long: uncharacterized protein (513 aa).

The segment at 1–48 is disordered; sequence MGSSEEQSVPGDDFYEESGDLNTGLSLVLRPAKSNEGESSLSSPKGSK. Positions 37–48 are enriched in polar residues; the sequence is GESSLSSPKGSK. 3 positions are modified to phosphoserine: S43, S84, and S123. Disordered stretches follow at residues 210 to 229, 236 to 287, 390 to 414, and 453 to 481; these read DGNH…GDLA, TRDS…GSKS, AKED…AEPP, and SVLS…TQGC.

This is an uncharacterized protein from Mus musculus (Mouse).